A 437-amino-acid polypeptide reads, in one-letter code: Magnetosome protein MamN (437 aa).

The next 11 helical transmembrane spans lie at 26–46 (LAVLAGAAALVVIGTISGSYT), 53–73 (SVYFETLALIFGMAAISALLA), 95–115 (WILVMMALVTYGISLASNSLV), 136–156 (VPVIIAEIIAANLGGASTMIG), 174–194 (FIAGMMPVCLILLAVMLVFFE), 226–246 (LLSYGLIIFGVTVAGLILAGP), 252–268 (GWIAFVAGVTALGLGRF), 281–301 (DILFYGGLFVMVGALTSVGIL), 320–340 (AILLMWMAAAVTIFVGGGTSA), 358–378 (AAWWALALGIMAGSVAALPGA), and 416–436 (WGMPLMGIFLVLGTVYIAVLV).

It belongs to the arsenite-antimonite (ArsB) efflux (TC 2.A.45) family.

It is found in the magnetosome membrane. Plays a role in biomineralization; might regulate pH in the magnetosome. This is Magnetosome protein MamN (mamN) from Paramagnetospirillum magneticum (strain ATCC 700264 / AMB-1) (Magnetospirillum magneticum).